Reading from the N-terminus, the 199-residue chain is Recombination protein RecR (199 aa).

Residues 57–72 (CSICGNITEGDPCSIC) form a C4-type zinc finger. Positions 80-176 (THVLVVEQPK…KVTRLAHGLS (97 aa)) constitute a Toprim domain.

Belongs to the RecR family.

In terms of biological role, may play a role in DNA repair. It seems to be involved in an RecBC-independent recombinational process of DNA repair. It may act with RecF and RecO. This chain is Recombination protein RecR, found in Levilactobacillus brevis (strain ATCC 367 / BCRC 12310 / CIP 105137 / JCM 1170 / LMG 11437 / NCIMB 947 / NCTC 947) (Lactobacillus brevis).